Consider the following 190-residue polypeptide: Potassium-transporting ATPase KdpC subunit (190 aa).

The chain crosses the membrane as a helical span at residues 13–33 (VGFLLLTLMCGVVYPGIVTIF).

Belongs to the KdpC family. As to quaternary structure, the system is composed of three essential subunits: KdpA, KdpB and KdpC.

The protein localises to the cell membrane. Its function is as follows. Part of the high-affinity ATP-driven potassium transport (or Kdp) system, which catalyzes the hydrolysis of ATP coupled with the electrogenic transport of potassium into the cytoplasm. This subunit acts as a catalytic chaperone that increases the ATP-binding affinity of the ATP-hydrolyzing subunit KdpB by the formation of a transient KdpB/KdpC/ATP ternary complex. This chain is Potassium-transporting ATPase KdpC subunit, found in Listeria monocytogenes serotype 4a (strain HCC23).